A 45-amino-acid chain; its full sequence is LYMGTATDNGATAMLNLVESLKYSWVPSTFSGQGAATPYDSNLVK.

It belongs to the glycosyl hydrolase 10 (cellulase F) family.

Its subcellular location is the secreted. The protein localises to the extracellular space. The enzyme catalyses Endohydrolysis of (1-&gt;4)-beta-D-xylosidic linkages in xylans.. It catalyses the reaction Endohydrolysis of (1-&gt;4)-beta-D-glucosidic linkages in cellulose, lichenin and cereal beta-D-glucans.. It functions in the pathway glycan degradation; xylan degradation. Functionally, has xylanase, avicelase and cellobiohydrolase activity. In Gloeophyllum trabeum (Brown rot fungus), this protein is Endo-1,4-beta-xylanase Xyn10A.